Here is a 148-residue protein sequence, read N- to C-terminus: uncharacterized protein (148 aa).

The protein belongs to the serpin family. Poxviruses subfamily.

This is an uncharacterized protein from Fowlpox virus (strain NVSL) (FPV).